The sequence spans 913 residues: Polyribonucleotide nucleotidyltransferase (913 aa).

The segment at 407 to 427 (YMHNYEMPPYSTGETGRVGSP) is disordered. The Mg(2+) site is built by Asp521 and Asp527. Residues 587 to 646 (PRIITTSVPVEKIGEVIGPKGKMINQIQEDTGAEIAIEDDGTVFISSEGGEAAEKAKAII) form the KH domain. The 73-residue stretch at 658-730 (GETYNGKVVK…DRGKISLAIP (73 aa)) folds into the S1 motif domain. Residues 727–913 (LAIPGFEDQE…VRRDFDPFED (187 aa)) form a disordered region. Composition is skewed to basic and acidic residues over residues 742 to 789 (SRGD…RRSD), 797 to 865 (DRPR…DRRG), and 872 to 898 (RGSD…ERTE).

Belongs to the polyribonucleotide nucleotidyltransferase family. The cofactor is Mg(2+).

The protein resides in the cytoplasm. The enzyme catalyses RNA(n+1) + phosphate = RNA(n) + a ribonucleoside 5'-diphosphate. Functionally, involved in mRNA degradation. Catalyzes the phosphorolysis of single-stranded polyribonucleotides processively in the 3'- to 5'-direction. The sequence is that of Polyribonucleotide nucleotidyltransferase from Bifidobacterium longum (strain DJO10A).